We begin with the raw amino-acid sequence, 166 residues long: Disulfide bond formation protein B (166 aa).

Over 1-10 (MGLNITNRQG) the chain is Cytoplasmic. The helical transmembrane segment at 11 to 27 (FLLVAAACAGAIGFALF) threads the bilayer. Residues 28–45 (AQYQLGEEPCPLCILQRI) lie on the Periplasmic side of the membrane. The cysteines at positions 37 and 40 are disulfide-linked. The chain crosses the membrane as a helical span at residues 46 to 62 (GVMAVGALALLAALHNP). The Cytoplasmic segment spans residues 63-69 (GKTGAKV). A helical membrane pass occupies residues 70 to 86 (WGGLMTLAALSGAGVSL). Topologically, residues 87–143 (RQLWLQSLPADQVPQCGPGLEFLMESFPLWEVLSKVLKGSGECAAIQGRFLGMTMPF) are periplasmic. Cysteine 102 and cysteine 129 are joined by a disulfide. Residues 144 to 162 (WVAVFFAGVIVWTLWLVGR) traverse the membrane as a helical segment. Topologically, residues 163-166 (RRRG) are cytoplasmic.

This sequence belongs to the DsbB family.

The protein localises to the cell inner membrane. In terms of biological role, required for disulfide bond formation in some periplasmic proteins. Acts by oxidizing the DsbA protein. This chain is Disulfide bond formation protein B, found in Chromobacterium violaceum (strain ATCC 12472 / DSM 30191 / JCM 1249 / CCUG 213 / NBRC 12614 / NCIMB 9131 / NCTC 9757 / MK).